We begin with the raw amino-acid sequence, 1028 residues long: Protein SMAX1-LIKE 5 (1028 aa).

In terms of domain architecture, Clp R spans 8 to 199 (IQQTLTTEAA…CVEDCSVSSV (192 aa)). 2 repeat regions span residues 12–102 (LTTE…LNRL) and 116–199 (LANA…VSSV). The EAR motif lies at 871–875 (LDLNI).

Belongs to the ClpA/ClpB family. As to quaternary structure, interacts probably with TPL/TPR in an EAR-motif dependent manner. In terms of tissue distribution, detected in roots, seedlings and axillary branches.

In terms of biological role, may function in a transcriptional corepressor complex. The sequence is that of Protein SMAX1-LIKE 5 from Arabidopsis thaliana (Mouse-ear cress).